A 379-amino-acid polypeptide reads, in one-letter code: Alanine racemase (379 aa).

Catalysis depends on Lys40, which acts as the Proton acceptor; specific for D-alanine. Lys40 carries the post-translational modification N6-(pyridoxal phosphate)lysine. Arg138 is a binding site for substrate. Catalysis depends on Tyr267, which acts as the Proton acceptor; specific for L-alanine. Met315 is a substrate binding site.

The protein belongs to the alanine racemase family. Pyridoxal 5'-phosphate is required as a cofactor.

It carries out the reaction L-alanine = D-alanine. The protein operates within amino-acid biosynthesis; D-alanine biosynthesis; D-alanine from L-alanine: step 1/1. Functionally, catalyzes the interconversion of L-alanine and D-alanine. May also act on other amino acids. The sequence is that of Alanine racemase (alr) from Halothermothrix orenii (strain H 168 / OCM 544 / DSM 9562).